Consider the following 331-residue polypeptide: MSIAAKDIEPADIPGNLQGGEYSPYHVFSAEEWSRFRADTPLTLTADEVQRLRSLNDPVDLDEVRRIYLSLSRLLSAHVEASQILFRQRTRFLSMSNETKTPFVIGVAGSVAVGKSTTARILAELLARWPSSPKVDLVTTDGFLYPNAVLQRESLMDRKGFPESYDIGALLRFLSAIKAGRPNVKAPTYSHLTYDVIPDQFQLVDRPDILVFEGINVLQSRDLPADGKIVPMVSDFFDFSIYIDAEESLIHSWYVNRFMRLRETAFQNPQSFFHRYATISEDAARAIAEGLWHNINLKNLHQNILPTRPRADLILQKGPSHLTQTVALRKL.

ATP is bound at residue 109 to 116 (GSVAVGKS).

It belongs to the prokaryotic pantothenate kinase family.

The protein resides in the cytoplasm. The enzyme catalyses (R)-pantothenate + ATP = (R)-4'-phosphopantothenate + ADP + H(+). It participates in cofactor biosynthesis; coenzyme A biosynthesis; CoA from (R)-pantothenate: step 1/5. The protein is Pantothenate kinase of Sinorhizobium medicae (strain WSM419) (Ensifer medicae).